Consider the following 379-residue polypeptide: tRNA (guanine(26)-N(2))-dimethyltransferase (379 aa).

In terms of domain architecture, Trm1 methyltransferase spans 4–375 (VEVLEGKAKI…APYEVFVNVL (372 aa)). Arg36, Arg61, Asp78, Asp120, and Ala121 together coordinate S-adenosyl-L-methionine.

Belongs to the class I-like SAM-binding methyltransferase superfamily. Trm1 family.

The catalysed reaction is guanosine(26) in tRNA + 2 S-adenosyl-L-methionine = N(2)-dimethylguanosine(26) in tRNA + 2 S-adenosyl-L-homocysteine + 2 H(+). Its function is as follows. Dimethylates a single guanine residue at position 26 of a number of tRNAs using S-adenosyl-L-methionine as donor of the methyl groups. The sequence is that of tRNA (guanine(26)-N(2))-dimethyltransferase from Pyrococcus abyssi (strain GE5 / Orsay).